Here is a 436-residue protein sequence, read N- to C-terminus: UDP-N-acetylmuramate--L-alanine ligase (436 aa).

An ATP-binding site is contributed by 108–114 (GAHGKTS).

Belongs to the MurCDEF family.

It localises to the cytoplasm. The enzyme catalyses UDP-N-acetyl-alpha-D-muramate + L-alanine + ATP = UDP-N-acetyl-alpha-D-muramoyl-L-alanine + ADP + phosphate + H(+). It participates in cell wall biogenesis; peptidoglycan biosynthesis. Functionally, cell wall formation. This is UDP-N-acetylmuramate--L-alanine ligase from Bacillus cereus (strain Q1).